The primary structure comprises 105 residues: Flagellar transcriptional regulator FlhD (105 aa).

It belongs to the FlhD family. In terms of assembly, homodimer; disulfide-linked. Forms a heterohexamer composed of two FlhC and four FlhD subunits. Each FlhC binds a FlhD dimer, forming a heterotrimer, and a hexamer assembles by dimerization of two heterotrimers.

Its subcellular location is the cytoplasm. Functions in complex with FlhC as a master transcriptional regulator that regulates transcription of several flagellar and non-flagellar operons by binding to their promoter region. Activates expression of class 2 flagellar genes, including fliA, which is a flagellum-specific sigma factor that turns on the class 3 genes. Also regulates genes whose products function in a variety of physiological pathways. The protein is Flagellar transcriptional regulator FlhD of Cupriavidus necator (strain ATCC 17699 / DSM 428 / KCTC 22496 / NCIMB 10442 / H16 / Stanier 337) (Ralstonia eutropha).